A 729-amino-acid chain; its full sequence is Polyribonucleotide nucleotidyltransferase (729 aa).

Residues aspartate 485 and aspartate 491 each coordinate Mg(2+). Residues 552-611 form the KH domain; it reads PRITTMKVAEDKIRTIIGKGGATIKGLIESTGVSIDIDDSGVVQLFSPDKMALEEAQKQI. The 69-residue stretch at 621-689 folds into the S1 motif domain; that stretch reads GQTYQGKVSK…KQGRVKLEWK (69 aa).

It belongs to the polyribonucleotide nucleotidyltransferase family. Component of the RNA degradosome, which is a multiprotein complex involved in RNA processing and mRNA degradation. Mg(2+) serves as cofactor.

It localises to the cytoplasm. The catalysed reaction is RNA(n+1) + phosphate = RNA(n) + a ribonucleoside 5'-diphosphate. Functionally, involved in mRNA degradation. Catalyzes the phosphorolysis of single-stranded polyribonucleotides processively in the 3'- to 5'-direction. This Legionella pneumophila subsp. pneumophila (strain Philadelphia 1 / ATCC 33152 / DSM 7513) protein is Polyribonucleotide nucleotidyltransferase.